A 334-amino-acid chain; its full sequence is Holliday junction branch migration complex subunit RuvB (334 aa).

Residues 4–184 (ADRLIQPQLQ…FGIPLRLEFY (181 aa)) form a large ATPase domain (RuvB-L) region. ATP-binding positions include arginine 24, glycine 65, lysine 68, threonine 69, threonine 70, 131 to 133 (EDY), arginine 174, tyrosine 184, and arginine 221. Mg(2+) is bound at residue threonine 69. The tract at residues 185 to 255 (NVKDLSTIVT…VAEHALDLLD (71 aa)) is small ATPAse domain (RuvB-S). A head domain (RuvB-H) region spans residues 258 to 334 (GEGFDYMDRK…YLHFGMIKPE (77 aa)). Residues arginine 294, arginine 313, and arginine 318 each coordinate DNA.

It belongs to the RuvB family. In terms of assembly, homohexamer. Forms an RuvA(8)-RuvB(12)-Holliday junction (HJ) complex. HJ DNA is sandwiched between 2 RuvA tetramers; dsDNA enters through RuvA and exits via RuvB. An RuvB hexamer assembles on each DNA strand where it exits the tetramer. Each RuvB hexamer is contacted by two RuvA subunits (via domain III) on 2 adjacent RuvB subunits; this complex drives branch migration. In the full resolvosome a probable DNA-RuvA(4)-RuvB(12)-RuvC(2) complex forms which resolves the HJ.

The protein localises to the cytoplasm. The enzyme catalyses ATP + H2O = ADP + phosphate + H(+). The RuvA-RuvB-RuvC complex processes Holliday junction (HJ) DNA during genetic recombination and DNA repair, while the RuvA-RuvB complex plays an important role in the rescue of blocked DNA replication forks via replication fork reversal (RFR). RuvA specifically binds to HJ cruciform DNA, conferring on it an open structure. The RuvB hexamer acts as an ATP-dependent pump, pulling dsDNA into and through the RuvAB complex. RuvB forms 2 homohexamers on either side of HJ DNA bound by 1 or 2 RuvA tetramers; 4 subunits per hexamer contact DNA at a time. Coordinated motions by a converter formed by DNA-disengaged RuvB subunits stimulates ATP hydrolysis and nucleotide exchange. Immobilization of the converter enables RuvB to convert the ATP-contained energy into a lever motion, pulling 2 nucleotides of DNA out of the RuvA tetramer per ATP hydrolyzed, thus driving DNA branch migration. The RuvB motors rotate together with the DNA substrate, which together with the progressing nucleotide cycle form the mechanistic basis for DNA recombination by continuous HJ branch migration. Branch migration allows RuvC to scan DNA until it finds its consensus sequence, where it cleaves and resolves cruciform DNA. This Shewanella sp. (strain MR-4) protein is Holliday junction branch migration complex subunit RuvB.